A 292-amino-acid polypeptide reads, in one-letter code: Small ribosomal subunit biogenesis GTPase RsgA (292 aa).

One can recognise a CP-type G domain in the interval 64–221 (RSELFRPAVA…LVDTPGFSSL (158 aa)). GTP is bound by residues 113–116 (NKMD) and 164–172 (GPSGVGKST). Zn(2+) is bound by residues Cys245, Cys250, His252, and Cys258.

This sequence belongs to the TRAFAC class YlqF/YawG GTPase family. RsgA subfamily. Monomer. Associates with 30S ribosomal subunit, binds 16S rRNA. The cofactor is Zn(2+).

It is found in the cytoplasm. In terms of biological role, one of several proteins that assist in the late maturation steps of the functional core of the 30S ribosomal subunit. Helps release RbfA from mature subunits. May play a role in the assembly of ribosomal proteins into the subunit. Circularly permuted GTPase that catalyzes slow GTP hydrolysis, GTPase activity is stimulated by the 30S ribosomal subunit. The sequence is that of Small ribosomal subunit biogenesis GTPase RsgA from Clostridium botulinum (strain Okra / Type B1).